The sequence spans 98 residues: NADH-ubiquinone oxidoreductase chain 4L (98 aa).

3 consecutive transmembrane segments (helical) span residues 1 to 21, 29 to 49, and 61 to 81; these read MSLTYMNMFMAFTISLLGLLM, SLLCLEGMMLSLFVMMTMVIL, and IILLVFAACEAALGLSLLVMV.

This sequence belongs to the complex I subunit 4L family. In terms of assembly, core subunit of respiratory chain NADH dehydrogenase (Complex I) which is composed of 45 different subunits.

It is found in the mitochondrion inner membrane. It carries out the reaction a ubiquinone + NADH + 5 H(+)(in) = a ubiquinol + NAD(+) + 4 H(+)(out). Its function is as follows. Core subunit of the mitochondrial membrane respiratory chain NADH dehydrogenase (Complex I) which catalyzes electron transfer from NADH through the respiratory chain, using ubiquinone as an electron acceptor. Part of the enzyme membrane arm which is embedded in the lipid bilayer and involved in proton translocation. In Vampyressa thyone (Northern little yellow-eared bat), this protein is NADH-ubiquinone oxidoreductase chain 4L (MT-ND4L).